Here is a 501-residue protein sequence, read N- to C-terminus: Ribose import ATP-binding protein RbsA (501 aa).

ABC transporter domains lie at 5-241 (LQLQ…VGRK) and 252-495 (APGE…VGKQ). 37 to 44 (GENGAGKS) is an ATP binding site.

Belongs to the ABC transporter superfamily. Ribose importer (TC 3.A.1.2.1) family. In terms of assembly, the complex is composed of an ATP-binding protein (RbsA), two transmembrane proteins (RbsC) and a solute-binding protein (RbsB).

It localises to the cell inner membrane. It carries out the reaction D-ribose(out) + ATP + H2O = D-ribose(in) + ADP + phosphate + H(+). Functionally, part of the ABC transporter complex RbsABC involved in ribose import. Responsible for energy coupling to the transport system. This is Ribose import ATP-binding protein RbsA from Pectobacterium atrosepticum (strain SCRI 1043 / ATCC BAA-672) (Erwinia carotovora subsp. atroseptica).